An 89-amino-acid polypeptide reads, in one-letter code: Defensin-like protein 250 (89 aa).

Positions 1-23 are cleaved as a signal peptide; that stretch reads MKLAAIFLVSCVLLSLLPSLTIA. 4 disulfides stabilise this stretch: Cys29/Cys86, Cys40/Cys69, Cys48/Cys79, and Cys67/Cys81.

It belongs to the DEFL family.

The protein resides in the secreted. The polypeptide is Defensin-like protein 250 (SCRL8) (Arabidopsis thaliana (Mouse-ear cress)).